The primary structure comprises 965 residues: Phosphatidylethanolamine N-methyltransferase (965 aa).

Residues 1–55 (MSSSAADPFAARLNSDVRQRHPTASATSKNVEGTSQQKQQQQQQQSEANAAASRV) form a disordered region. Residues 1 to 91 (MSSSAADPFA…DPREPKNLSD (91 aa)) are Lumenal-facing. Residues 22–35 (PTASATSKNVEGTS) show a composition bias toward polar residues. Residues 36–45 (QQKQQQQQQQ) are compositionally biased toward low complexity. The chain crosses the membrane as a helical span at residues 92-112 (VAVLAIIALHFLAAYYLPWGV). Over 113 to 115 (KRP) the chain is Cytoplasmic. A helical membrane pass occupies residues 116–136 (LFAAIFMFWRLAYNVGIGYLL). The Lumenal portion of the chain corresponds to 137–201 (TIQSKYKLLV…EYNTWLTFRR (65 aa)). A helical membrane pass occupies residues 202-222 (VVDLILMCDFISYCLFAIVCA). Residues 223–229 (HKPDGEG) lie on the Cytoplasmic side of the membrane. A helical membrane pass occupies residues 230 to 250 (LFMCFARWAAGITLVGFNLWV). At 251 to 279 (KLDAHRVVKDYAWYWGDFFYLIEQELTFD) the chain is on the lumenal side. A helical membrane pass occupies residues 280 to 300 (GVFELAPHPMYSIGYAGYYGI). At 301–306 (SMMAAS) the chain is on the cytoplasmic side. Residues 307-327 (YDVLFISIIAHAAQFAFLVIV) traverse the membrane as a helical segment. At 328 to 389 (ENPHIEKTYN…IGLKNLDFFR (62 aa)) the chain is on the lumenal side. Residues 390-410 (ITDVAIVLLCAYLAVVTMVTP) form a helical membrane-spanning segment. At 411-417 (NTRFYQA) the chain is on the cytoplasmic side. A helical membrane pass occupies residues 418–438 (LFVLHALAWRLWYSAGLGVIL). Residues 439 to 467 (TMQSEEKMFTRHFLKYGESVGEAWRQWKG) lie on the Lumenal side of the membrane. Residues 468–488 (IYHLSNCLCHASFIAASYKMY) form a helical membrane-spanning segment. The Cytoplasmic portion of the chain corresponds to 489–496 (EFPADWTY). The helical transmembrane segment at 497–517 (GWALLKHVVGLSLIALQVWTA) threads the bilayer. Residues 518–573 (TSIYESLGEFGWFYGDFFFDSKRQLTYTSIYRFLNNPERVFGTAGLWGAALITWSR) lie on the Lumenal side of the membrane. Residues 574–594 (AIFLMALAGHFLTLAFLAYVE) traverse the membrane as a helical segment. Topologically, residues 595-965 (KPHMQKVYGR…TTPVDSKFSE (371 aa)) are cytoplasmic.

The protein belongs to the class VI-like SAM-binding methyltransferase superfamily. CHO2 family.

The protein resides in the endoplasmic reticulum membrane. The catalysed reaction is a 1,2-diacyl-sn-glycero-3-phosphoethanolamine + S-adenosyl-L-methionine = a 1,2-diacyl-sn-glycero-3-phospho-N-methylethanolamine + S-adenosyl-L-homocysteine + H(+). Its pathway is phospholipid metabolism; phosphatidylcholine biosynthesis. Its function is as follows. Catalyzes the first step of the methylation pathway of phosphatidylcholine biosynthesis, the SAM-dependent methylation of phosphatidylethanolamine (PE) to phosphatidylmonomethylethanolamine (PMME). This Neurospora crassa (strain ATCC 24698 / 74-OR23-1A / CBS 708.71 / DSM 1257 / FGSC 987) protein is Phosphatidylethanolamine N-methyltransferase.